The following is a 95-amino-acid chain: MRQIMILLVRFYQRAISPILPDSCCFYPTCSSYMITALEKQGPLLGLLMGLARILRCNPFNRGGVDPVPDKFTLLRNPHPEEYEDEIIARKFHSH.

Belongs to the UPF0161 family.

It is found in the cell membrane. Functionally, could be involved in insertion of integral membrane proteins into the membrane. The polypeptide is Putative membrane protein insertion efficiency factor (Lactobacillus delbrueckii subsp. bulgaricus (strain ATCC 11842 / DSM 20081 / BCRC 10696 / JCM 1002 / NBRC 13953 / NCIMB 11778 / NCTC 12712 / WDCM 00102 / Lb 14)).